We begin with the raw amino-acid sequence, 561 residues long: Putative transport protein YbjL (561 aa).

Helical transmembrane passes span 8–28 (LLNG…LCLG), 32–52 (LGSV…LLGQ), 66–86 (FMLF…SIFF), 94–114 (MLAL…GKLF), and 158–178 (NLSL…IVGA). RCK C-terminal domains are found at residues 200-288 (RGLD…SLRN) and 292-373 (VFDR…RIGF). Transmembrane regions (helical) follow at residues 383–403 (LLAF…TFQF), 406–426 (FSFG…LGFL), 447–467 (FGLM…ISNG), 475–495 (MLIA…LFGA), and 540–560 (AIAN…WPGL).

This sequence belongs to the AAE transporter (TC 2.A.81) family. YbjL subfamily.

The protein resides in the cell membrane. This Salmonella gallinarum (strain 287/91 / NCTC 13346) protein is Putative transport protein YbjL.